Consider the following 52-residue polypeptide: Rubredoxin (52 aa).

The Rubredoxin-like domain occupies 1 to 51; the sequence is MDKYECSICGYIYDEAEGDDGNVAAGTKFADLPADWVCPTCGADKDAFVKM. Cys-6, Cys-9, Cys-38, and Cys-41 together coordinate Fe cation.

Belongs to the rubredoxin family. Requires Fe(3+) as cofactor.

Functionally, rubredoxin is a small nonheme, iron protein lacking acid-labile sulfide. Its single Fe, chelated to 4 Cys, functions as an electron acceptor and may also stabilize the conformation of the molecule. This is Rubredoxin from Megasphaera elsdenii.